Here is a 243-residue protein sequence, read N- to C-terminus: HTH-type transcriptional repressor NagR (243 aa).

The region spanning 9–77 (IPIYYQIMEQ…KGRGTFVSKP (69 aa)) is the HTH gntR-type domain. Positions 37–56 (EREYAEQFGISRMTVRQALS) form a DNA-binding region, H-T-H motif. Residues 89–90 (FT), 133–135 (RVR), Glu145, 165–167 (SIY), Glu222, and Tyr228 contribute to the alpha-D-glucosamine 6-phosphate site. N-acetyl-D-glucosamine 6-phosphate is bound by residues 89–90 (FT), 133–135 (RVR), Glu145, 165–167 (SIY), Glu222, and Tyr228.

In terms of assembly, homodimer. Forms dimers via the C-terminal effector-binding domain. At high concentrations, probably forms polymers along the DNA.

Its activity is regulated as follows. Binding to DNA is allosterically inhibited by an effector molecule. Binding of the effector to the C-terminal domain leads to a conformational change that modulates binding to DNA and thereby regulates transcription of the target genes. Glucosamine-6-phosphate (GlcN6P) and/or N-acetylglucosamine-6-phosphate (GlcNAc6P) are putative effectors of NagR. Binding of GlcNAc6P may prevent the protein-protein interactions responsible for polymerization along the DNA, but not the specific DNA binding. Its function is as follows. Main transcriptional repressor of genes involved in N-acetylglucosamine (GlcNAc) transport and utilization. Represses the expression of the nagAB and nagP operons by binding directly within their upstream regions. Binds to the DNA consensus sequence 5'-ATTGGTATAGACAACT-3'. Also acts as a weak repressor of mapB expression. The protein is HTH-type transcriptional repressor NagR of Bacillus subtilis (strain 168).